The primary structure comprises 196 residues: Probable inactive nicotinamidase At3g16190 (196 aa).

The protein belongs to the isochorismatase family.

Does not possess nicotinamidase activity in vitro. The sequence is that of Probable inactive nicotinamidase At3g16190 from Arabidopsis thaliana (Mouse-ear cress).